Reading from the N-terminus, the 843-residue chain is Tetratricopeptide repeat protein 7B (843 aa).

The stretch at 97–131 is one TPR 1 repeat; it reads QESNLVMAKLTYVEGDYKEALNIYARVGLDDLPLT. Phosphoserine is present on residues Ser160 and Ser202. TPR repeat units follow at residues 219–252, 363–396, 397–430, 479–514, 516–548, and 549–582; these read ETGL…VETR, SVVY…AFEE, FHLW…KPDD, TYSL…SPTD, QAAF…QGDD, and ANSL…YPEN. Phosphoserine occurs at positions 625, 629, 630, 673, 677, 678, and 681. TPR repeat units follow at residues 696-729, 730-763, 765-797, and 798-831; these read AQIW…FPMS, HNVL…SPTH, KSMQ…NSTA, and HEVW…EASS.

Component of a phosphatidylinositol 4-kinase (PI4K) complex, composed of PI4KA, EFR3 (EFR3A or EFR3B), TTC7 (TTC7A or TTC7B) and HYCC (HYCC1 or HYCC2). Interacts with PI4KA, interaction is direct. Interacts with EFR3 (EFR3A or EFR3B), interaction is direct. Interacts with HYCC (HYCC1 or HYCC2), interaction is direct. Association with the PI4K complex is strongly reduced by TMEM150A.

The protein localises to the cytoplasm. It localises to the cytosol. It is found in the cell membrane. In terms of biological role, component of a complex required to localize phosphatidylinositol 4-kinase (PI4K) to the plasma membrane. The complex acts as a regulator of phosphatidylinositol 4-phosphate (PtdIns(4)P) synthesis. In the complex, plays a central role in bridging PI4KA to EFR3B and HYCC1, via direct interactions. The sequence is that of Tetratricopeptide repeat protein 7B from Mus musculus (Mouse).